The primary structure comprises 192 residues: Acireductone dioxygenase 2 (192 aa).

Fe(2+)-binding residues include His99, His101, Glu105, and His144. Ni(2+) contacts are provided by His99, His101, Glu105, and His144.

It belongs to the acireductone dioxygenase (ARD) family. It depends on Fe(2+) as a cofactor. Ni(2+) is required as a cofactor.

Its subcellular location is the cytoplasm. It localises to the nucleus. The catalysed reaction is 1,2-dihydroxy-5-(methylsulfanyl)pent-1-en-3-one + O2 = 4-methylsulfanyl-2-oxobutanoate + formate + 2 H(+). It carries out the reaction 1,2-dihydroxy-5-(methylsulfanyl)pent-1-en-3-one + O2 = 3-(methylsulfanyl)propanoate + CO + formate + 2 H(+). It participates in amino-acid biosynthesis; L-methionine biosynthesis via salvage pathway; L-methionine from S-methyl-5-thio-alpha-D-ribose 1-phosphate: step 5/6. Catalyzes 2 different reactions between oxygen and the acireductone 1,2-dihydroxy-3-keto-5-methylthiopentene (DHK-MTPene) depending upon the metal bound in the active site. Fe-containing acireductone dioxygenase (Fe-ARD) produces formate and 2-keto-4-methylthiobutyrate (KMTB), the alpha-ketoacid precursor of methionine in the methionine recycle pathway. Ni-containing acireductone dioxygenase (Ni-ARD) produces methylthiopropionate, carbon monoxide and formate, and does not lie on the methionine recycle pathway. In Arabidopsis thaliana (Mouse-ear cress), this protein is Acireductone dioxygenase 2 (ARD2).